A 323-amino-acid polypeptide reads, in one-letter code: Tetraacyldisaccharide 4'-kinase (323 aa).

ATP is bound at residue 56–63 (TVGGVGKT).

Belongs to the LpxK family.

The enzyme catalyses a lipid A disaccharide + ATP = a lipid IVA + ADP + H(+). Its pathway is glycolipid biosynthesis; lipid IV(A) biosynthesis; lipid IV(A) from (3R)-3-hydroxytetradecanoyl-[acyl-carrier-protein] and UDP-N-acetyl-alpha-D-glucosamine: step 6/6. Transfers the gamma-phosphate of ATP to the 4'-position of a tetraacyldisaccharide 1-phosphate intermediate (termed DS-1-P) to form tetraacyldisaccharide 1,4'-bis-phosphate (lipid IVA). The sequence is that of Tetraacyldisaccharide 4'-kinase from Legionella pneumophila (strain Lens).